A 442-amino-acid chain; its full sequence is Zuotin (442 aa).

Positions 49–84 (RQRHGRTFSEDERLEVKNKVQEEVKEESEDEEEDPA) are disordered. The residue at position 55 (Thr55) is a Phosphothreonine. Positions 55 to 71 (TFSEDERLEVKNKVQEE) are enriched in basic and acidic residues. Ser57 and Ser76 each carry phosphoserine. The span at 72–83 (VKEESEDEEEDP) shows a compositional bias: acidic residues. Residues 97 to 167 (DHYAVLGLSK…VRRRQFDSVD (71 aa)) form the J domain. 2 disordered regions span residues 242-270 (DGES…DNAR) and 306-331 (GARE…EAAA). The span at 316–330 (KKKEEEERRAAEEAA) shows a compositional bias: basic and acidic residues.

RAC is a heterodimer of the Hsp70/DnaK-type chaperone ssz1 and the Hsp40/DnaJ-type chaperone zuo1. RAC associates with ribosomes via zuo1.

The protein localises to the cytoplasm. Component of the ribosome-associated complex (RAC), a heterodimeric chaperone complex involved in regulation of accurate translation termination and in folding or maintaining nascent polypeptides in a folding-competent state. RAC stimulates the ATPase activity of the ribosome-associated pool of Hsp70-type chaperones SSB1/SSB2 that bind to the nascent polypeptide chain. The chain is Zuotin (zuo1) from Schizosaccharomyces pombe (strain 972 / ATCC 24843) (Fission yeast).